The following is a 342-amino-acid chain: N-acetyl-gamma-glutamyl-phosphate reductase (342 aa).

Residue cysteine 147 is part of the active site.

Belongs to the NAGSA dehydrogenase family. Type 1 subfamily.

It is found in the cytoplasm. The catalysed reaction is N-acetyl-L-glutamate 5-semialdehyde + phosphate + NADP(+) = N-acetyl-L-glutamyl 5-phosphate + NADPH + H(+). It functions in the pathway amino-acid biosynthesis; L-arginine biosynthesis; N(2)-acetyl-L-ornithine from L-glutamate: step 3/4. In terms of biological role, catalyzes the NADPH-dependent reduction of N-acetyl-5-glutamyl phosphate to yield N-acetyl-L-glutamate 5-semialdehyde. In Campylobacter jejuni subsp. jejuni serotype O:2 (strain ATCC 700819 / NCTC 11168), this protein is N-acetyl-gamma-glutamyl-phosphate reductase.